A 313-amino-acid chain; its full sequence is Olfactory receptor 8B2 (313 aa).

The Extracellular portion of the chain corresponds to 1 to 25 (MLARNNSLVTEFILAGLTDHPEFRQ). A glycan (N-linked (GlcNAc...) asparagine) is linked at N5. A helical membrane pass occupies residues 26–46 (PLFFLFLVIYIVTMVGNLGLI). Topologically, residues 47–54 (TLFGLNSH) are cytoplasmic. Residues 55 to 75 (LHTPMYYFLFNLSFIDLCYSS) form a helical membrane-spanning segment. Residues 76–99 (VFTPKMLMNFVSKKNIISNVGCMT) are Extracellular-facing. A disulfide bridge links C97 with C189. Residues 100–120 (RLFFFLFFVISECYMLTSMAY) form a helical membrane-spanning segment. Residues 121–139 (DRYVAICNPLLYKVTMSHQ) are Cytoplasmic-facing. The chain crosses the membrane as a helical span at residues 140–160 (VCSMLTFAAYIMGLAGATAHT). Residues 161–197 (GCMLRLTFCSANIINHYLCDILPLLQLSCTSTYVNEV) are Extracellular-facing. The chain crosses the membrane as a helical span at residues 198-217 (VVLIVVGTNITVPSCTILIS). The Cytoplasmic portion of the chain corresponds to 218-237 (YVFIVTSILHIKSTQGRSKA). Residues 238-258 (FSTCSSHVIALSLFFGSAAFM) form a helical membrane-spanning segment. At 259 to 270 (YIKYSSGSMEQG) the chain is on the extracellular side. A helical transmembrane segment spans residues 271 to 291 (KVSSVFYTNVVPMLNPLIYSL). Residues 292 to 313 (RNKDVKVALRKALIKIQRRNIF) are Cytoplasmic-facing.

The protein belongs to the G-protein coupled receptor 1 family.

The protein resides in the cell membrane. Functionally, odorant receptor. This Homo sapiens (Human) protein is Olfactory receptor 8B2 (OR8B2).